Here is a 434-residue protein sequence, read N- to C-terminus: Serine--tRNA ligase (434 aa).

Thr239–Glu241 serves as a coordination point for L-serine. Arg270 to Glu272 contributes to the ATP binding site. Glu293 contributes to the L-serine binding site. ATP is bound at residue Glu357–Ser360. Ser392 provides a ligand contact to L-serine.

This sequence belongs to the class-II aminoacyl-tRNA synthetase family. Type-1 seryl-tRNA synthetase subfamily. Homodimer. The tRNA molecule binds across the dimer.

The protein localises to the cytoplasm. The enzyme catalyses tRNA(Ser) + L-serine + ATP = L-seryl-tRNA(Ser) + AMP + diphosphate + H(+). It carries out the reaction tRNA(Sec) + L-serine + ATP = L-seryl-tRNA(Sec) + AMP + diphosphate + H(+). It functions in the pathway aminoacyl-tRNA biosynthesis; selenocysteinyl-tRNA(Sec) biosynthesis; L-seryl-tRNA(Sec) from L-serine and tRNA(Sec): step 1/1. Catalyzes the attachment of serine to tRNA(Ser). Is also able to aminoacylate tRNA(Sec) with serine, to form the misacylated tRNA L-seryl-tRNA(Sec), which will be further converted into selenocysteinyl-tRNA(Sec). This chain is Serine--tRNA ligase, found in Cupriavidus necator (strain ATCC 17699 / DSM 428 / KCTC 22496 / NCIMB 10442 / H16 / Stanier 337) (Ralstonia eutropha).